The following is a 204-amino-acid chain: High frequency lysogenization protein HflD homolog (204 aa).

This sequence belongs to the HflD family.

It is found in the cytoplasm. The protein localises to the cell inner membrane. The chain is High frequency lysogenization protein HflD homolog from Xanthomonas euvesicatoria pv. vesicatoria (strain 85-10) (Xanthomonas campestris pv. vesicatoria).